Reading from the N-terminus, the 199-residue chain is Holliday junction branch migration complex subunit RuvA (199 aa).

Residues 1–65 (MIASLRGKLL…DRGQRLFGFG (65 aa)) form a domain I region. The domain II stretch occupies residues 66 to 144 (SKKDRESFEL…KFEMFLNEGT (79 aa)). The flexible linker stretch occupies residues 145–155 (TESSFVDRETD). The segment at 155 to 199 (DLATLALIQLGFDEKSATKQVADAKKLNPGLSASDIVKQVITGTR) is domain III.

It belongs to the RuvA family. In terms of assembly, homotetramer. Forms an RuvA(8)-RuvB(12)-Holliday junction (HJ) complex. HJ DNA is sandwiched between 2 RuvA tetramers; dsDNA enters through RuvA and exits via RuvB. An RuvB hexamer assembles on each DNA strand where it exits the tetramer. Each RuvB hexamer is contacted by two RuvA subunits (via domain III) on 2 adjacent RuvB subunits; this complex drives branch migration. In the full resolvosome a probable DNA-RuvA(4)-RuvB(12)-RuvC(2) complex forms which resolves the HJ.

It localises to the cytoplasm. The RuvA-RuvB-RuvC complex processes Holliday junction (HJ) DNA during genetic recombination and DNA repair, while the RuvA-RuvB complex plays an important role in the rescue of blocked DNA replication forks via replication fork reversal (RFR). RuvA specifically binds to HJ cruciform DNA, conferring on it an open structure. The RuvB hexamer acts as an ATP-dependent pump, pulling dsDNA into and through the RuvAB complex. HJ branch migration allows RuvC to scan DNA until it finds its consensus sequence, where it cleaves and resolves the cruciform DNA. In Leptospira biflexa serovar Patoc (strain Patoc 1 / Ames), this protein is Holliday junction branch migration complex subunit RuvA.